A 198-amino-acid chain; its full sequence is Ribonuclease HII (198 aa).

Residues 10-198 form the RNase H type-2 domain; it reads QLVAGVDEVG…PVKRALGLAS (189 aa). The a divalent metal cation site is built by Asp-16, Glu-17, and Asp-108.

Belongs to the RNase HII family. It depends on Mn(2+) as a cofactor. Mg(2+) is required as a cofactor.

Its subcellular location is the cytoplasm. It carries out the reaction Endonucleolytic cleavage to 5'-phosphomonoester.. Endonuclease that specifically degrades the RNA of RNA-DNA hybrids. The polypeptide is Ribonuclease HII (Citrobacter koseri (strain ATCC BAA-895 / CDC 4225-83 / SGSC4696)).